The sequence spans 838 residues: Lymphoid-specific helicase (838 aa).

Residues methionine 30–serine 115 adopt a coiled-coil conformation. The segment covering glutamine 94–lysine 108 has biased composition (basic and acidic residues). The disordered stretch occupies residues glutamine 94–serine 135. Position 115 is a phosphoserine (serine 115). The segment covering serine 119–glutamate 134 has biased composition (basic and acidic residues). Residues arginine 235 to aspartate 403 form the Helicase ATP-binding domain. Aspartate 248–threonine 255 serves as a coordination point for ATP. Residues aspartate 354–histidine 357 carry the DEAH box motif. 2 positions are modified to phosphoserine: serine 503 and serine 515. The Helicase C-terminal domain maps to isoleucine 603–aspartate 767.

It belongs to the SNF2/RAD54 helicase family. In terms of tissue distribution, highly expressed in proliferative tissues such as adult thymus and testis, and expressed at lower levels in uterus, small intestine, colon, and peripheral blood mononuclear cells. Also expressed in neoplastic cell lines including those derived from myeloid and lymphoid leukemias.

The protein resides in the nucleus. Its function is as follows. Plays an essential role in normal development and survival. Involved in regulation of the expansion or survival of lymphoid cells. Required for de novo or maintenance DNA methylation. May control silencing of the imprinted CDKN1C gene through DNA methylation. May play a role in formation and organization of heterochromatin, implying a functional role in the regulation of transcription and mitosis. The protein is Lymphoid-specific helicase of Homo sapiens (Human).